The primary structure comprises 177 residues: Interleukin-1 receptor antagonist protein (177 aa).

Positions 1–25 (MEIRRRSVRHLISLLLFLFYSETAC) are cleaved as a signal peptide. Cys-91 and Cys-141 are disulfide-bonded. N-linked (GlcNAc...) asparagine glycosylation is present at Asn-109.

It belongs to the IL-1 family.

The protein localises to the secreted. Its function is as follows. Anti-inflammatory antagonist of interleukin-1 family of proinflammatory cytokines such as interleukin-1beta/IL1B and interleukin-1alpha/IL1A. Protects from immune dysregulation and uncontrolled systemic inflammation triggered by IL1 for a range of innate stimulatory agents such as pathogens. In Equus caballus (Horse), this protein is Interleukin-1 receptor antagonist protein (IL1RN).